Consider the following 749-residue polypeptide: MFKRTIPLFAAFTLAISPSVFPNYAYAQEDKPKTNQYWWPKMLDLSPLRQPNATSNPMGEQFNYAEEFNSLDLNAVIEDLKKLMTTSQDWWPADYGNYGPLFIRMSWHAAGTYRIYDGRGGANGGFQRFAPQNSWPDNANLDKARRLLWPIKQKYGRKISWADLLVLAGNVAMESMGFKTIGFAGGREDAWEAININWGPEGKWLESKRQDKDGKLEKPLAATVMGLIYVNPEGPNGVPDPLAAAEKIRETFGRMAMNDEETVALIAGGHAFGKTHGAASGKYLGPAPEAAGIEEQGFGWKNSYGSGKGKDTITSGLEGAWTVTPTHWSHNYLQNLFNFNWVKTKSPGGAIQWVPENSNASSMVPDAFDPSKRHAPVMLTTDLALKFDPVYSKIAKRFLDNPKEFDDAFARAWFKLIHRDMGPRSRYLGSLVPKEIMIWQDPVPPVDYKLVDANDIANLKGKILNSGLSTSELVKTAWASASTFRGTDMRGGANGARIRLSPQKDWPANDPQELAKVLKTLESIQNNFNNAQADGKKISLADLIVLGGNAAIEQAAKQAGYDIIVPFMPGRTDATQGMTDVKSFEVLEPKADGFRNYFDKSNNMSPPEMLVEKASLLKLSVPQMTVLVGGMRVLNANTGQNQYGVFTDKPGTLNNDFFVNLLSMSTEWKKSSETEGIYEGYDRKTGKLKWKATSVDLIFGANSELRAVAEAYATDDAKEKFIQDFVNAWVKVMTADRFDIKAANTNINS.

The N-terminal stretch at 1-27 (MFKRTIPLFAAFTLAISPSVFPNYAYA) is a signal peptide. A cross-link (tryptophyl-tyrosyl-methioninium (Trp-Tyr) (with M-255)) is located at residues 107–229 (WHAAGTYRIY…LAATVMGLIY (123 aa)). H108 (proton acceptor) is an active-site residue. Positions 229–255 (YVNPEGPNGVPDPLAAAEKIRETFGRM) form a cross-link, tryptophyl-tyrosyl-methioninium (Tyr-Met) (with W-107). Position 270 (H270) interacts with heme b.

This sequence belongs to the peroxidase family. Peroxidase/catalase subfamily. Homodimer or homotetramer. Requires heme b as cofactor. Formation of the three residue Trp-Tyr-Met cross-link is important for the catalase, but not the peroxidase activity of the enzyme.

The catalysed reaction is H2O2 + AH2 = A + 2 H2O. It catalyses the reaction 2 H2O2 = O2 + 2 H2O. In terms of biological role, bifunctional enzyme with both catalase and broad-spectrum peroxidase activity. This chain is Catalase-peroxidase 2, found in Legionella pneumophila (strain Paris).